The sequence spans 237 residues: MTPQDFYRTLEEDGFSLSSKQKEQFDTYFKLLVEWNTKINLTAITEENEVYLKHFYDSIAPILQGFLANEPIKLLDIGAGAGFPSLPMKILFPNLEVTIIDSLNKRISFLTLLAQELGLENVHFFHGRAEDFGQDKAFRGQFDAVTARAVARMQVLSELTIPFLKIRGKLIALKAQAADQELEEAKNALCLLFGKVIKNHSYQLPNGDSRFITIVEKKKETPNKYPRKAGLPNKKPL.

S-adenosyl-L-methionine-binding positions include G78, F83, 129–130 (AE), and R148.

The protein belongs to the methyltransferase superfamily. RNA methyltransferase RsmG family.

Its subcellular location is the cytoplasm. Specifically methylates the N7 position of a guanine in 16S rRNA. This Streptococcus pyogenes serotype M6 (strain ATCC BAA-946 / MGAS10394) protein is Ribosomal RNA small subunit methyltransferase G.